A 157-amino-acid chain; its full sequence is Endoribonuclease YbeY (157 aa).

3 residues coordinate Zn(2+): His-121, His-125, and Asp-131.

Belongs to the endoribonuclease YbeY family. It depends on Zn(2+) as a cofactor.

It localises to the cytoplasm. Its function is as follows. Single strand-specific metallo-endoribonuclease involved in late-stage 70S ribosome quality control and in maturation of the 3' terminus of the 16S rRNA. This is Endoribonuclease YbeY from Salinibacter ruber (strain DSM 13855 / M31).